We begin with the raw amino-acid sequence, 395 residues long: Sulfate adenylyltransferase (395 aa).

It belongs to the sulfate adenylyltransferase family.

The enzyme catalyses sulfate + ATP + H(+) = adenosine 5'-phosphosulfate + diphosphate. The protein operates within sulfur metabolism; hydrogen sulfide biosynthesis; sulfite from sulfate: step 1/3. In Synechococcus elongatus (strain ATCC 33912 / PCC 7942 / FACHB-805) (Anacystis nidulans R2), this protein is Sulfate adenylyltransferase.